We begin with the raw amino-acid sequence, 222 residues long: Pectate lyase A (222 aa).

An N-terminal signal peptide occupies residues 1–25 (MKKMLTLLLSAGLVASIFGVMPAAA).

This sequence belongs to the polysaccharide lyase 3 family. The cofactor is Ca(2+).

Its subcellular location is the secreted. It catalyses the reaction Eliminative cleavage of (1-&gt;4)-alpha-D-galacturonan to give oligosaccharides with 4-deoxy-alpha-D-galact-4-enuronosyl groups at their non-reducing ends.. The enzyme catalyses Eliminative cleavage of (1-&gt;4)-alpha-D-galacturonan methyl ester to give oligosaccharides with 4-deoxy-6-O-methyl-alpha-D-galact-4-enuronosyl groups at their non-reducing ends.. It participates in glycan metabolism; pectin degradation; 2-dehydro-3-deoxy-D-gluconate from pectin: step 2/5. Its activity is regulated as follows. Strongly inhibited by Ba(2+). To a lesser extent, is also inhibited by Sn(2+), Mg(2+) and Ag(+). Inhibited by EDTA in vitro. In terms of biological role, catalyzes the depolymerization of both polygalacturonate and pectins of methyl esterification degree from 22 to 89%, with an endo mode of action. In contrast to the majority of pectate lyases, displays high activity on highly methylated pectins. Is not able to cleave trigalacturonate. Does not degrade xylans and carboxymethylcellulose (CMC). This chain is Pectate lyase A (pelA), found in Paenibacillus barcinonensis.